The following is a 548-amino-acid chain: Eukaryotic translation initiation factor 3 subunit D (548 aa).

Lys53 carries the post-translational modification N6-acetyllysine. Ser161 carries the post-translational modification Phosphoserine. The interval 285–299 is RNA gate; the sequence is DFDLLTVSETANEPP. The interval 523–548 is disordered; sequence PDGTFSSDEDEEEEEEEEEEEEEEET. Phosphoserine is present on residues Ser528 and Ser529. Over residues 529-548 the composition is skewed to acidic residues; sequence SDEDEEEEEEEEEEEEEEET.

The protein belongs to the eIF-3 subunit D family. As to quaternary structure, component of the eukaryotic translation initiation factor 3 (eIF-3) complex, which is composed of 13 subunits: EIF3A, EIF3B, EIF3C, EIF3D, EIF3E, EIF3F, EIF3G, EIF3H, EIF3I, EIF3J, EIF3K, EIF3L and EIF3M. The eIF-3 complex appears to include 3 stable modules: module A is composed of EIF3A, EIF3B, EIF3G and EIF3I; module B is composed of EIF3F, EIF3H, and EIF3M; and module C is composed of EIF3C, EIF3D, EIF3E, EIF3K and EIF3L. EIF3C of module C binds EIF3B of module A and EIF3H of module B, thereby linking the three modules. EIF3J is a labile subunit that binds to the eIF-3 complex via EIF3B. The eIF-3 complex interacts with RPS6KB1 under conditions of nutrient depletion. Mitogenic stimulation leads to binding and activation of a complex composed of MTOR and RPTOR, leading to phosphorylation and release of RPS6KB1 and binding of EIF4B to eIF-3.

The protein resides in the cytoplasm. In terms of biological role, mRNA cap-binding component of the eukaryotic translation initiation factor 3 (eIF-3) complex, a complex required for several steps in the initiation of protein synthesis of a specialized repertoire of mRNAs. The eIF-3 complex associates with the 40S ribosome and facilitates the recruitment of eIF-1, eIF-1A, eIF-2:GTP:methionyl-tRNAi and eIF-5 to form the 43S pre-initiation complex (43S PIC). The eIF-3 complex stimulates mRNA recruitment to the 43S PIC and scanning of the mRNA for AUG recognition. The eIF-3 complex is also required for disassembly and recycling of post-termination ribosomal complexes and subsequently prevents premature joining of the 40S and 60S ribosomal subunits prior to initiation. The eIF-3 complex specifically targets and initiates translation of a subset of mRNAs involved in cell proliferation, including cell cycling, differentiation and apoptosis, and uses different modes of RNA stem-loop binding to exert either translational activation or repression. In the eIF-3 complex, EIF3D specifically recognizes and binds the 7-methylguanosine cap of a subset of mRNAs. The chain is Eukaryotic translation initiation factor 3 subunit D from Macaca fascicularis (Crab-eating macaque).